Consider the following 306-residue polypeptide: Glutaminase (306 aa).

Residues Ser61, Asn111, Glu157, Asn164, Tyr188, Tyr240, and Val258 each contribute to the substrate site.

The protein belongs to the glutaminase family. As to quaternary structure, homotetramer.

The enzyme catalyses L-glutamine + H2O = L-glutamate + NH4(+). This is Glutaminase from Pseudoalteromonas atlantica (strain T6c / ATCC BAA-1087).